Here is a 204-residue protein sequence, read N- to C-terminus: Thymidylate kinase (204 aa).

ATP is bound at residue 10 to 17; the sequence is GGDGAGKT.

It belongs to the thymidylate kinase family.

It catalyses the reaction dTMP + ATP = dTDP + ADP. Phosphorylation of dTMP to form dTDP in both de novo and salvage pathways of dTTP synthesis. This is Thymidylate kinase from Cutibacterium acnes (strain DSM 16379 / KPA171202) (Propionibacterium acnes).